The following is an 836-amino-acid chain: Ethylene receptor 3 (836 aa).

3 consecutive transmembrane segments (helical) span residues Leu-137 to Arg-157, Leu-166 to Thr-186, and Leu-204 to Leu-224. Cu cation is bound by residues Cys-176 and His-180. One can recognise a GAF domain in the interval Asp-269–Leu-413. Residues Ala-416–Ala-452 adopt a coiled-coil conformation. The Histidine kinase domain maps to Met-457–Pro-691. The Response regulatory domain occupies Leu-718–Gln-834.

This sequence belongs to the ethylene receptor family. Requires Cu cation as cofactor.

Its subcellular location is the endoplasmic reticulum membrane. The enzyme catalyses ATP + protein L-histidine = ADP + protein N-phospho-L-histidine.. Functionally, ethylene receptor related to bacterial two-component regulators. Acts as a negative regulator of ethylene signaling. May delay the transition from the vegetative stage to the floral stage by up-regulating GI (GIGANTEA) and RCN1 and cause starch accumulation in stems by down-regulating the alpha-amylase AMY3D. The protein is Ethylene receptor 3 (ETR3) of Oryza sativa subsp. japonica (Rice).